The sequence spans 190 residues: Heme-binding protein 1 (190 aa).

Belongs to the HEBP family. In terms of assembly, monomer.

The protein localises to the cytoplasm. May bind free porphyrinogens that may be present in the cell and thus facilitate removal of these potentially toxic compound. Binds with a high affinity to one molecule of heme or porphyrins. It binds metalloporphyrins, free porphyrins and N-methylprotoporphyrin with similar affinities. This is Heme-binding protein 1 (hebp1) from Xenopus laevis (African clawed frog).